Reading from the N-terminus, the 230-residue chain is Orotidine 5'-phosphate decarboxylase (230 aa).

Substrate is bound by residues aspartate 11, lysine 34, 61–70 (DLKLHDIPNT), threonine 117, arginine 179, glutamine 188, glycine 208, and arginine 209. Lysine 63 (proton donor) is an active-site residue.

The protein belongs to the OMP decarboxylase family. Type 1 subfamily. In terms of assembly, homodimer.

It carries out the reaction orotidine 5'-phosphate + H(+) = UMP + CO2. Its pathway is pyrimidine metabolism; UMP biosynthesis via de novo pathway; UMP from orotate: step 2/2. In terms of biological role, catalyzes the decarboxylation of orotidine 5'-monophosphate (OMP) to uridine 5'-monophosphate (UMP). The chain is Orotidine 5'-phosphate decarboxylase from Streptococcus uberis (strain ATCC BAA-854 / 0140J).